The following is a 217-amino-acid chain: Small ribosomal subunit protein uS3 (217 aa).

One can recognise a KH type-2 domain in the interval 38 to 106; that stretch reads IRKFINKELA…QVHINIIEIK (69 aa).

The protein belongs to the universal ribosomal protein uS3 family. In terms of assembly, part of the 30S ribosomal subunit. Forms a tight complex with proteins S10 and S14.

In terms of biological role, binds the lower part of the 30S subunit head. Binds mRNA in the 70S ribosome, positioning it for translation. This chain is Small ribosomal subunit protein uS3, found in Streptococcus pyogenes serotype M6 (strain ATCC BAA-946 / MGAS10394).